Consider the following 103-residue polypeptide: Small ribosomal subunit protein uS10 (103 aa).

Belongs to the universal ribosomal protein uS10 family. Part of the 30S ribosomal subunit.

Its function is as follows. Involved in the binding of tRNA to the ribosomes. This chain is Small ribosomal subunit protein uS10, found in Xylella fastidiosa (strain M12).